The following is a 508-amino-acid chain: Probable monogalactosyldiacylglycerol synthase 3, chloroplastic (508 aa).

The transit peptide at methionine 1–glycine 60 directs the protein to the chloroplast. The tract at residues serine 51–glutamate 79 is disordered.

It belongs to the glycosyltransferase 28 family.

It is found in the plastid. Its subcellular location is the chloroplast membrane. The catalysed reaction is a 1,2-diacyl-sn-glycerol + UDP-alpha-D-galactose = a 1,2-diacyl-3-O-(beta-D-galactosyl)-sn-glycerol + UDP + H(+). In terms of biological role, involved in the synthesis of the major structural component of photosynthetic membranes. The sequence is that of Probable monogalactosyldiacylglycerol synthase 3, chloroplastic (MGD3) from Oryza sativa subsp. japonica (Rice).